Consider the following 196-residue polypeptide: ATP-dependent Clp protease proteolytic subunit (196 aa).

Ser-98 serves as the catalytic Nucleophile. The active site involves His-123.

It belongs to the peptidase S14 family. As to quaternary structure, fourteen ClpP subunits assemble into 2 heptameric rings which stack back to back to give a disk-like structure with a central cavity, resembling the structure of eukaryotic proteasomes.

Its subcellular location is the cytoplasm. The catalysed reaction is Hydrolysis of proteins to small peptides in the presence of ATP and magnesium. alpha-casein is the usual test substrate. In the absence of ATP, only oligopeptides shorter than five residues are hydrolyzed (such as succinyl-Leu-Tyr-|-NHMec, and Leu-Tyr-Leu-|-Tyr-Trp, in which cleavage of the -Tyr-|-Leu- and -Tyr-|-Trp bonds also occurs).. In terms of biological role, cleaves peptides in various proteins in a process that requires ATP hydrolysis. Has a chymotrypsin-like activity. Plays a major role in the degradation of misfolded proteins. The sequence is that of ATP-dependent Clp protease proteolytic subunit from Geobacillus sp. (strain WCH70).